A 243-amino-acid polypeptide reads, in one-letter code: Cysteine-rich secretory protein 2 (243 aa).

The first 21 residues, 1–21 (MALLPVLFLVTVLLPSLPAEG), serve as a signal peptide directing secretion. An SCP domain is found at 41-169 (VNKHNELRKA…SLKYYYVCQY (129 aa)). 5 cysteine pairs are disulfide-bonded: Cys189–Cys196, Cys192–Cys201, Cys205–Cys238, Cys214–Cys232, and Cys223–Cys236. Residues 205 to 238 (CQYQDLLSNCDSLKNTAGCEHELLKEKCKATCLC) enclose the ShKT domain.

It belongs to the CRISP family. Interacts with NSUN4 isoform 3. In terms of tissue distribution, testis and epididymis.

It localises to the secreted. Its function is as follows. May regulate some ion channels' activity and thereby regulate calcium fluxes during sperm capacitation. The protein is Cysteine-rich secretory protein 2 (CRISP2) of Homo sapiens (Human).